The primary structure comprises 157 residues: Epithelial membrane protein 1 (157 aa).

A helical membrane pass occupies residues 1-21 (MLVLLAGIFVVHIATVIMLFV). N-linked (GlcNAc...) asparagine glycans are attached at residues Asn43 and Asn46. 3 helical membrane-spanning segments follow: residues 67–87 (FMIL…FQLF), 95–115 (FFLS…GVSI), and 134–154 (YILG…YLVL).

The protein belongs to the PMP-22/EMP/MP20 family.

The protein resides in the membrane. In Homo sapiens (Human), this protein is Epithelial membrane protein 1 (EMP1).